Consider the following 169-residue polypeptide: Ribosome maturation factor RimM (169 aa).

In terms of domain architecture, PRC barrel spans 91-167; it reads EGEYYFADLI…RIVIATDFAH (77 aa).

This sequence belongs to the RimM family. As to quaternary structure, binds ribosomal protein uS19.

The protein resides in the cytoplasm. In terms of biological role, an accessory protein needed during the final step in the assembly of 30S ribosomal subunit, possibly for assembly of the head region. Essential for efficient processing of 16S rRNA. May be needed both before and after RbfA during the maturation of 16S rRNA. It has affinity for free ribosomal 30S subunits but not for 70S ribosomes. This chain is Ribosome maturation factor RimM, found in Erythrobacter litoralis (strain HTCC2594).